The sequence spans 387 residues: Exodeoxyribonuclease 7 large subunit (387 aa).

Belongs to the XseA family. Heterooligomer composed of large and small subunits.

It localises to the cytoplasm. It carries out the reaction Exonucleolytic cleavage in either 5'- to 3'- or 3'- to 5'-direction to yield nucleoside 5'-phosphates.. Bidirectionally degrades single-stranded DNA into large acid-insoluble oligonucleotides, which are then degraded further into small acid-soluble oligonucleotides. This Campylobacter jejuni (strain RM1221) protein is Exodeoxyribonuclease 7 large subunit.